The following is a 250-amino-acid chain: ATP synthase subunit a (250 aa).

Helical transmembrane passes span 25 to 45 (VSFTNSAAFMVGIVALIFFFL), 84 to 104 (VFFPLVFSLFVFVFVANVIGL), 115 to 135 (IVVTAALALLVIGTVVIYGFY), 141 to 161 (FLHLFVPSGVPAFLLPFIVLI), 187 to 209 (ALKVFAFFVVGLGSAGFLGWLGA), and 223 to 243 (ELLVAILQAYVFAVLTSIYLN).

Belongs to the ATPase A chain family. As to quaternary structure, F-type ATPases have 2 components, CF(1) - the catalytic core - and CF(0) - the membrane proton channel. CF(1) has five subunits: alpha(3), beta(3), gamma(1), delta(1), epsilon(1). CF(0) has three main subunits: a(1), b(2) and c(9-12). The alpha and beta chains form an alternating ring which encloses part of the gamma chain. CF(1) is attached to CF(0) by a central stalk formed by the gamma and epsilon chains, while a peripheral stalk is formed by the delta and b chains.

Its subcellular location is the cell inner membrane. Key component of the proton channel; it plays a direct role in the translocation of protons across the membrane. This Azorhizobium caulinodans (strain ATCC 43989 / DSM 5975 / JCM 20966 / LMG 6465 / NBRC 14845 / NCIMB 13405 / ORS 571) protein is ATP synthase subunit a.